Consider the following 200-residue polypeptide: Small ribosomal subunit protein eS1 (200 aa).

This sequence belongs to the eukaryotic ribosomal protein eS1 family.

This Thermococcus sibiricus (strain DSM 12597 / MM 739) protein is Small ribosomal subunit protein eS1.